Here is a 244-residue protein sequence, read N- to C-terminus: Carbonyl reductase [NADPH] 2 (244 aa).

Residue 11–39 (LVTGAGKGIGRDTVKALHASGAKVVAVTR) participates in NADP(+) binding. S42 is subject to Phosphoserine. A substrate-binding site is contributed by S136. Y149 (proton acceptor) is an active-site residue. S176 is subject to Phosphoserine.

The protein belongs to the short-chain dehydrogenases/reductases (SDR) family. In terms of assembly, homotetramer. In terms of tissue distribution, predominantly expressed in lung, in ciliated cells, non-ciliated bronchiolar cells and type-II alveolar pneumocytes. Also detected in adipose tissue (at protein level). Low expression in testis, heart, kidney, spleen, brain and liver.

It is found in the mitochondrion matrix. It catalyses the reaction a secondary alcohol + NADP(+) = a ketone + NADPH + H(+). May function in the pulmonary metabolism of endogenous carbonyl compounds, such as aliphatic aldehydes and ketones derived from lipid peroxidation, 3-ketosteroids and fatty aldehydes, as well as in xenobiotic metabolism. The sequence is that of Carbonyl reductase [NADPH] 2 (Cbr2) from Mus musculus (Mouse).